The following is a 210-amino-acid chain: Calcineurin B-like protein 4 (210 aa).

The N-myristoyl glycine moiety is linked to residue glycine 2. EF-hand domains follow at residues 31-66 (EVEA…RNSR), 67-102 (KANL…FHPK), 104-139 (PKSE…LLDE), and 148-183 (AVEA…NPAS). Ca(2+) is bound by residues aspartate 161, asparagine 163, aspartate 165, arginine 167, and glutamate 172.

It belongs to the calcineurin regulatory subunit family. As to quaternary structure, homodimer. Interacts with CIPK24. Expressed in leaves.

The protein localises to the cell membrane. Functionally, acts as a calcium sensor involved in the regulatory pathway for the control of intracellular Na(+) and K(+) homeostasis and salt tolerance. Operates in synergy with CIPK24 to activate the plasma membrane Na(+)/H(+) antiporter SOS1. May function as positive regulator of salt stress responses. CBL proteins interact with CIPK serine-threonine protein kinases. Binding of a CBL protein to the regulatory NAF domain of a CIPK protein lead to the activation of the kinase in a calcium-dependent manner. This Oryza sativa subsp. japonica (Rice) protein is Calcineurin B-like protein 4 (CBL4).